The following is a 166-amino-acid chain: Nicotine metabolites export pump subunit NepB (166 aa).

4 helical membrane passes run 51–71 (LHAW…TVIL), 77–97 (FQLP…FFLL), 108–128 (VAYA…GAII), and 133–153 (VTLG…ILNL).

Belongs to the drug/metabolite transporter (DMT) superfamily. Small multidrug resistance (SMR) (TC 2.A.7.1) family. NepA/NepB subfamily. The efflux pump is composed of NepA and NepB.

It is found in the cell membrane. In terms of biological role, component of an efflux pump responsible for the transport of nicotine breakdown products, in particular methylamine, out of the cell. This pump apparently serves as a metabolic valve for nicotine catabolites and may protect the bacteria from the potentially toxic side effects of these compounds. This Paenarthrobacter nicotinovorans (Arthrobacter nicotinovorans) protein is Nicotine metabolites export pump subunit NepB (nepB).